The following is a 512-amino-acid chain: Cytochrome P450 71BT1 (512 aa).

Positions 1–24 (MENLFIFLFALLLFCFMLLKLSKK) are cleaved as a signal peptide. 2 N-linked (GlcNAc...) asparagine glycosylation sites follow: N111 and N168. C447 contacts heme.

It belongs to the cytochrome P450 family.

The polypeptide is Cytochrome P450 71BT1 (Catharanthus roseus (Madagascar periwinkle)).